We begin with the raw amino-acid sequence, 220 residues long: Octanoyltransferase (220 aa).

The 187-residue stretch at 31 to 217 (ENTPDEIWLV…HFAEILGYNA (187 aa)) folds into the BPL/LPL catalytic domain. Substrate is bound by residues 70–77 (RGGQITYH), 146–148 (SLG), and 159–161 (GLA). Cysteine 177 functions as the Acyl-thioester intermediate in the catalytic mechanism.

This sequence belongs to the LipB family.

It localises to the cytoplasm. It catalyses the reaction octanoyl-[ACP] + L-lysyl-[protein] = N(6)-octanoyl-L-lysyl-[protein] + holo-[ACP] + H(+). It functions in the pathway protein modification; protein lipoylation via endogenous pathway; protein N(6)-(lipoyl)lysine from octanoyl-[acyl-carrier-protein]: step 1/2. Functionally, catalyzes the transfer of endogenously produced octanoic acid from octanoyl-acyl-carrier-protein onto the lipoyl domains of lipoate-dependent enzymes. Lipoyl-ACP can also act as a substrate although octanoyl-ACP is likely to be the physiological substrate. This chain is Octanoyltransferase, found in Actinobacillus succinogenes (strain ATCC 55618 / DSM 22257 / CCUG 43843 / 130Z).